The following is a 411-amino-acid chain: SH3 and cysteine-rich domain-containing protein 2 (411 aa).

A disordered region spans residues 1–29 (MTEMSEKENEPDDAATHSPPGTVSALQET). The segment covering 19-29 (PPGTVSALQET) has biased composition (polar residues). The residue at position 48 (Ser-48) is a Phosphoserine. Positions 64-95 (TEVLLTPPTPLPPPSPPPTASDRGLATPSPSP) are disordered. A compositionally biased stretch (pro residues) spans 70-82 (PPTPLPPPSPPPT). The Phorbol-ester/DAG-type zinc-finger motif lies at 110–161 (LHSFQEHVFKRASPCELCHQLIVGNSKQGLRCKMCKVSVHLWCSEEISHQQC). Disordered regions lie at residues 174–203 (SSPL…KVDP) and 219–288 (RSSF…ATLR). Residues 219–232 (RSSFSSTSESPTRS) show a composition bias toward low complexity. 2 SH3 domains span residues 292 to 351 (GPMY…RVRP) and 354 to 411 (NVWR…LTEI).

Interacts (via SH3 domains) with CACNA1S. Interacts (via SH3 domains) with CACNA1C. Has much lower affinity for CACNA1C than for CACNA1S.

Its subcellular location is the cytoplasm. It is found in the cytosol. The protein localises to the cell membrane. It localises to the sarcolemma. Functionally, plays a redundant role in promoting the expression of calcium channel CACNA1S at the cell membrane, and thereby contributes to increased channel activity. Slows down the inactivation rate of the calcium channel CACNA1C. In Homo sapiens (Human), this protein is SH3 and cysteine-rich domain-containing protein 2 (STAC2).